The sequence spans 1268 residues: SR-related and CTD-associated factor 8 (1268 aa).

In terms of domain architecture, CID spans Met-1–Pro-139. Thr-6 is modified (phosphothreonine). A Glycyl lysine isopeptide (Lys-Gly) (interchain with G-Cter in SUMO1) cross-link involves residue Lys-18. Position 273 is a phosphoserine (Ser-273). Disordered regions lie at residues Gln-322–Phe-355 and Glu-385–Ser-469. The span at His-342–His-354 shows a compositional bias: polar residues. Basic residues predominate over residues Val-394–Ser-443. Residues Ser-447–Lys-461 show a composition bias toward basic and acidic residues. The RRM domain maps to Thr-477 to Asn-551. Thr-615 carries the post-translational modification Phosphothreonine. Position 617 is a phosphoserine (Ser-617). The tract at residues Ala-753–Ser-808 is disordered. Residues Ala-763–Glu-774 show a composition bias toward basic and acidic residues. 3 positions are modified to asymmetric dimethylarginine: Arg-915, Arg-925, and Arg-936. The tract at residues Gln-947–Val-1063 is disordered. Residues His-961–Pro-970 show a composition bias toward pro residues. Composition is skewed to basic and acidic residues over residues Glu-1009–Ile-1025 and Asp-1032–Val-1063. The residue at position 1071 (Arg-1071) is an Asymmetric dimethylarginine. Positions Ala-1199 to Thr-1268 are disordered. The span at Gly-1249–Ser-1262 shows a compositional bias: low complexity.

As to quaternary structure, interacts with POLR2A; via C-terminal heptapeptide repeat domain (CTD) phosphorylated at 'Ser-2' and 'Ser-5'. Identified in a complex with CDC5L and other spliceosomal proteins.

It localises to the nucleus. It is found in the nucleus matrix. In terms of biological role, anti-terminator protein required to prevent early mRNA termination during transcription. Together with SCAF4, acts by suppressing the use of early, alternative poly(A) sites, thereby preventing the accumulation of non-functional truncated proteins. Mechanistically, associates with the phosphorylated C-terminal heptapeptide repeat domain (CTD) of the largest RNA polymerase II subunit (POLR2A), and subsequently binds nascent RNA upstream of early polyadenylation sites to prevent premature mRNA transcript cleavage and polyadenylation. Independently of SCAF4, also acts as a positive regulator of transcript elongation. This Rattus norvegicus (Rat) protein is SR-related and CTD-associated factor 8.